Reading from the N-terminus, the 296-residue chain is uncharacterized protein (296 aa).

A helical transmembrane segment spans residues 1-21; it reads MIFAVVDILEISIQLLCILLF.

The protein resides in the membrane. This is an uncharacterized protein from Caenorhabditis elegans.